A 56-amino-acid chain; its full sequence is Large ribosomal subunit protein bL32 (56 aa).

The segment at 1–37 is disordered; the sequence is MAVQQNKKSRSRRDMRRSHDALTTAAISVDKASGEKH. A compositionally biased stretch (basic residues) spans 7-16; that stretch reads KKSRSRRDMR.

The protein belongs to the bacterial ribosomal protein bL32 family.

The chain is Large ribosomal subunit protein bL32 (rpmF) from Pasteurella multocida (strain Pm70).